Reading from the N-terminus, the 2440-residue chain is Nuclear receptor corepressor 1 (2440 aa).

Residues 1–18 (MSSSGYPPNQGAFSTEQS) are compositionally biased toward polar residues. 2 disordered regions span residues 1–177 (MSSS…SKLS) and 206–231 (QQQL…VEQK). The interaction with ZBTB33 and HEXIM1 stretch occupies residues 1–373 (MSSSGYPPNQ…QRGAGLSATI (373 aa)). The segment covering 51–64 (SQASQLLQQQQQQQ) has biased composition (low complexity). 3 stretches are compositionally biased toward basic and acidic residues: residues 77-88 (PGSDRPQERRTS), 99-119 (VDHD…DSHF), and 141-155 (ADAK…KHEA). The residue at position 172 (Ser-172) is a Phosphoserine. The stretch at 174 to 216 (SKLSKEELIQSMDRVDREIAKVEQQILKLKKKQQQLEEEAAKP) forms a coiled coil. A compositionally biased stretch (basic and acidic residues) spans 212–221 (EAAKPPEPEK). Position 224 is a phosphoserine (Ser-224). Positions 254–312 (FEGLGPKVELPLYNQPSDTKVYHENIKTNQVMRKKLILFFKRRNHARKQREQKICQRYD) are interaction with SIN3A/B. Residues 299–328 (ARKQREQKICQRYDQLMEAWEKKVDRIENN) adopt a coiled-coil conformation. Positions 435 to 486 (QFMNVWTDHEKEIFKDKFIQHPKNFGLIASYLERKSVPDCVLYYYLTKKNEN) constitute an SANT 1 domain. Disordered stretches follow at residues 497–632 (KRRG…TEEE) and 677–915 (NLLQ…GSIL). The stretch at 501-557 (RNQQIARPSQEEKVEEKEEDKAEKTEKKEEEKKDEEEKDEKEDSKENTKEKDKIDGT) forms a coiled coil. 2 stretches are compositionally biased toward basic and acidic residues: residues 509 to 531 (SQEE…KEEE) and 541 to 556 (KEDS…KIDG). Low complexity predominate over residues 592–605 (EAAAASAAAAAATE). Pro residues predominate over residues 606–617 (EPPPPLPPPPEP). The SANT 2 domain maps to 623–674 (VETSRWTEEEMEVAKKGLVEHGRNWAAIAKMVGTKSEAQCKNFYFNYKRRHN). Polar residues predominate over residues 698-708 (QCESVASTVSA). Over residues 709–728 (QEDEDIEASNEEENPEDSEV) the composition is skewed to acidic residues. The segment covering 752–768 (ELEPTTETAPSTSPSLA) has biased composition (low complexity). Residues 781 to 792 (ETQVNDSISAET) show a composition bias toward polar residues. The span at 820–859 (DSVDVEVRVPENHASKVEGDNTKERDLDRASEKVEPRDED) shows a compositional bias: basic and acidic residues. Polar residues-rich tracts occupy residues 864–883 (QQIN…SATC) and 906–915 (SLLNPTGSIL). The interaction with ETO stretch occupies residues 988-1816 (RSSTSPCGTS…QGLPASRYNT (829 aa)). Ser-999 is modified (phosphoserine). The segment at 1022-1046 (VRLPTTRPTRPPPPLIPSSKTTVAS) is disordered. Lys-1106 is covalently cross-linked (Glycyl lysine isopeptide (Lys-Gly) (interchain with G-Cter in SUMO1); alternate). Lys-1106 participates in a covalent cross-link: Glycyl lysine isopeptide (Lys-Gly) (interchain with G-Cter in SUMO2); alternate. Ser-1111 is modified (phosphoserine). A Glycyl lysine isopeptide (Lys-Gly) (interchain with G-Cter in SUMO2) cross-link involves residue Lys-1184. Residues 1184–1204 (KGSISRMPIEDSSPEKGREEA) form a disordered region. Phosphoserine is present on residues Ser-1195, Ser-1196, Ser-1249, Ser-1263, Ser-1281, and Ser-1322. Lys-1336 is modified (N6-acetyllysine). Thr-1367 is modified (phosphothreonine). A Glycyl lysine isopeptide (Lys-Gly) (interchain with G-Cter in SUMO2) cross-link involves residue Lys-1389. Lys-1412 participates in a covalent cross-link: Glycyl lysine isopeptide (Lys-Gly) (interchain with G-Cter in SUMO2); alternate. An N6-acetyllysine; alternate modification is found at Lys-1412. The interval 1440-1459 (AGETVRSRHTSVVSSGPSVL) is disordered. Phosphoserine is present on residues Ser-1450 and Ser-1472. Residues 1488–1512 (YQNTMSRGSPMMNRTSDVTISSNKS) show a composition bias toward polar residues. The segment at 1488-1554 (YQNTMSRGSP…SPFDPHHRGS (67 aa)) is disordered. The interval 1501–2440 (RTSDVTISSN…QYETLSDSDD (940 aa)) is interaction with C1D. Residue Lys-1518 forms a Glycyl lysine isopeptide (Lys-Gly) (interchain with G-Cter in SUMO2) linkage. Phosphoserine is present on Ser-1592. Disordered regions lie at residues 1690-1759 (PRPY…SPSP) and 1884-1922 (SSAF…LRTR). Composition is skewed to basic and acidic residues over residues 1712 to 1729 (AERE…RERI) and 1903 to 1921 (AGKD…ELRT). The short motif at 1933 to 1937 (IDVII) is the CORNR box 1 element. A disordered region spans residues 1943-1969 (SDKDARERGSQSSDSSSSLSSHRYETP). Residues 1952 to 1963 (SQSSDSSSSLSS) are compositionally biased toward low complexity. 2 positions are modified to phosphoserine: Ser-1977 and Ser-1981. The tract at residues 2006 to 2041 (PTRQYEGPLHHYRPQQESPSPQQQLPPSSQAEGMGQ) is disordered. Residues 2020 to 2035 (QQESPSPQQQLPPSSQ) are compositionally biased toward low complexity. An ID1 region spans residues 2032–2115 (PSSQAEGMGQ…QAQSVHHQRP (84 aa)). The required for interaction with RARA in the absence of its ligand stretch occupies residues 2047–2050 (RLIT). The CORNR box 2 motif lies at 2055–2059 (ICQII). Residues 2067–2086 (QVSSQTPQQPPTSTFQNSPS) show a composition bias toward low complexity. A disordered region spans residues 2067–2155 (QVSSQTPQQP…PYEPISPPQV (89 aa)). The segment covering 2087–2110 (ALVSTPVRTKTSNRYSPESQAQSV) has biased composition (polar residues). Phosphoserine is present on residues Ser-2102, Ser-2120, Ser-2136, Ser-2151, and Ser-2184. Residues 2124-2142 (LVDKSRGSRPGKSPERSHV) show a composition bias toward basic and acidic residues. The segment at 2212-2273 (IFRKLNSSGG…EDIIRKALMG (62 aa)) is ID2. The CORNR box 3 signature appears at 2263-2267 (LEDII). Residues 2287-2440 (SQPMGVVPGT…QYETLSDSDD (154 aa)) are disordered. Residues 2296–2305 (TANTSVVTSG) are compositionally biased toward polar residues. Residue Thr-2399 is modified to Phosphothreonine. 2 stretches are compositionally biased toward polar residues: residues 2407–2418 (AVNQAAPHQQNR) and 2431–2440 (QYETLSDSDD). Residues Ser-2436 and Ser-2438 each carry the phosphoserine modification.

This sequence belongs to the N-CoR nuclear receptor corepressors family. As to quaternary structure, forms a large corepressor complex that contains SIN3A/B and histone deacetylases HDAC1 and HDAC2. This complex associates with the thyroid receptor (TR) and the retinoid acid receptor (RAR) in the absence of ligand. Interacts directly with RARA; the interaction is facilitated with RARA trimethylation. Component of the N-Cor repressor complex, at least composed of CBFA2T3, HEXIM1, NCOR1, NCOR2, HDAC3, TBL1X, TBL1XR1, CORO2A and GPS2. Interacts with ZBTB33; the interaction serves to recruit the N-CoR complex to promoter regions containing methylated CpG dinucleotides. Interacts with TRIM28 and KDM3A. Interacts (via the RD1 domain) with BAZ1A (via its N-terminal); the interaction corepresses a number of NCOR1-regulated genes. Interacts with BCL6, C1D, DACH1, HEXIM1, HDAC7, RORA, RORC, SAP30, SIAH2, SIN3A and SIN3B. May interact with DEAF1. Interacts with RXRA. Interacts with SETD5. Interacts with VDR. Interacts with ZBTB7A. Interacts with AR. Interacts with HDAC3. Post-translationally, ubiquitinated; mediated by SIAH2 and leading to its subsequent proteasomal degradation.

The protein localises to the nucleus. Functionally, mediates transcriptional repression by certain nuclear receptors. Part of a complex which promotes histone deacetylation and the formation of repressive chromatin structures which may impede the access of basal transcription factors. Participates in the transcriptional repressor activity produced by BCL6. Recruited by ZBTB7A to the androgen response elements/ARE on target genes, negatively regulates androgen receptor signaling and androgen-induced cell proliferation. Mediates the NR1D1-dependent repression and circadian regulation of TSHB expression. The NCOR1-HDAC3 complex regulates the circadian expression of the core clock gene ARTNL/BMAL1 and the genes involved in lipid metabolism in the liver. The polypeptide is Nuclear receptor corepressor 1 (NCOR1) (Homo sapiens (Human)).